The chain runs to 312 residues: Malate dehydrogenase (312 aa).

NAD(+) contacts are provided by residues 7–13 (GAAGGIG) and Asp34. Residues Arg81 and Arg87 each coordinate substrate. NAD(+) is bound by residues Asn94 and 117–119 (ITN). Asn119 and Arg153 together coordinate substrate. The active-site Proton acceptor is the His177. Met227 contributes to the NAD(+) binding site.

This sequence belongs to the LDH/MDH superfamily. MDH type 1 family. In terms of assembly, homodimer.

It carries out the reaction (S)-malate + NAD(+) = oxaloacetate + NADH + H(+). Catalyzes the reversible oxidation of malate to oxaloacetate. This is Malate dehydrogenase from Salmonella agona (strain SL483).